Here is a 182-residue protein sequence, read N- to C-terminus: MTFVPSKIFFTKGVGRHREYLSSFELALRDAKIEKCNLVTVSSIYPPSCKRISIEEGLKHLSPGQITFCVMARNSTNERNRLIASSIGVALPADASQYGYLSEHHPYGETAEYAGEYAEDLAATMLATTLGIEFDSNTAWDEREEVYKMSGKIVKSFNVTQSAEGDKNGLWTTVISAAILLP.

Position 43 is a pyruvic acid (Ser) (Ser43).

This sequence belongs to the PdaD family. Requires pyruvate as cofactor.

It catalyses the reaction L-arginine + H(+) = agmatine + CO2. The protein is Probable pyruvoyl-dependent arginine decarboxylase of Chloroherpeton thalassium (strain ATCC 35110 / GB-78).